Here is a 98-residue protein sequence, read N- to C-terminus: Small ribosomal subunit protein uS19 (98 aa).

Residues 77 to 98 (TRTYRGHAGGKAEKGGAAPKRK) are disordered.

This sequence belongs to the universal ribosomal protein uS19 family.

Functionally, protein S19 forms a complex with S13 that binds strongly to the 16S ribosomal RNA. This is Small ribosomal subunit protein uS19 from Chlorobium phaeovibrioides (strain DSM 265 / 1930) (Prosthecochloris vibrioformis (strain DSM 265)).